A 590-amino-acid chain; its full sequence is L-gulonolactone oxidase 5 (590 aa).

An N-terminal signal peptide occupies residues 1-31 (MAFGYSPSYCSFWRTLLGLYCLFTLVHTVIS). The region spanning 60 to 242 (STCRAANVAY…SQVTFELQPM (183 aa)) is the FAD-binding PCMH-type domain.

The protein belongs to the oxygen-dependent FAD-linked oxidoreductase family. It depends on FAD as a cofactor.

The catalysed reaction is L-gulono-1,4-lactone + O2 = L-ascorbate + H2O2 + H(+). It participates in cofactor biosynthesis; L-ascorbate biosynthesis. Catalyzes the oxidation of L-gulono-1,4-lactone to ascorbic acid. L-gulono-1,4-lactone is oxidized to hydrogen peroxide and L-xylo-hexulonolactone which spontaneously isomerizes to L-ascorbate. This is L-gulonolactone oxidase 5 from Arabidopsis thaliana (Mouse-ear cress).